Reading from the N-terminus, the 874-residue chain is Alanine--tRNA ligase (874 aa).

Residues His-562, His-566, Cys-664, and His-668 each contribute to the Zn(2+) site.

It belongs to the class-II aminoacyl-tRNA synthetase family. It depends on Zn(2+) as a cofactor.

It is found in the cytoplasm. It catalyses the reaction tRNA(Ala) + L-alanine + ATP = L-alanyl-tRNA(Ala) + AMP + diphosphate. Functionally, catalyzes the attachment of alanine to tRNA(Ala) in a two-step reaction: alanine is first activated by ATP to form Ala-AMP and then transferred to the acceptor end of tRNA(Ala). Also edits incorrectly charged Ser-tRNA(Ala) and Gly-tRNA(Ala) via its editing domain. This Neisseria gonorrhoeae (strain ATCC 700825 / FA 1090) protein is Alanine--tRNA ligase.